We begin with the raw amino-acid sequence, 265 residues long: Di-trans,poly-cis-undecaprenyl-diphosphate synthase (265 aa).

An RXG motif; crucial for prenyltransferase activity motif is present at residues 236 to 238; it reads RFG.

Belongs to the UPP synthase family. Requires Mg(2+) as cofactor.

It catalyses the reaction 8 isopentenyl diphosphate + (2E,6E)-farnesyl diphosphate = di-trans,octa-cis-undecaprenyl diphosphate + 8 diphosphate. Its pathway is protein modification; protein glycosylation. It functions in the pathway lipid metabolism. In terms of biological role, cis-prenyl transferase involved in the synthesis of dolichol, a long-chain polyprenol that is utilized as a sugar carrier in protein glycosylation in the endoplasmic reticulum (ER). Catalyzes the sequential condensation of isopentenyl pyrophosphate (IPP) with farnesyl pyrophosphate (FPP) to produce a polyprenyl pyrophosphate which contains 11 (major) and 12 (minor) isoprene units. The polypeptide is Di-trans,poly-cis-undecaprenyl-diphosphate synthase (Giardia intestinalis (strain ATCC 50803 / WB clone C6) (Giardia lamblia)).